The primary structure comprises 224 residues: Uracil-DNA glycosylase 2 (224 aa).

The active-site Proton acceptor is D64.

Belongs to the uracil-DNA glycosylase (UDG) superfamily. UNG family.

It localises to the cytoplasm. The enzyme catalyses Hydrolyzes single-stranded DNA or mismatched double-stranded DNA and polynucleotides, releasing free uracil.. In terms of biological role, excises uracil residues from the DNA which can arise as a result of misincorporation of dUMP residues by DNA polymerase or due to deamination of cytosine. This chain is Uracil-DNA glycosylase 2, found in Listeria monocytogenes serovar 1/2a (strain ATCC BAA-679 / EGD-e).